The sequence spans 212 residues: Cytidylate kinase (212 aa).

7–15 (GPAASGKGT) lines the ATP pocket.

This sequence belongs to the cytidylate kinase family. Type 1 subfamily.

The protein resides in the cytoplasm. It carries out the reaction CMP + ATP = CDP + ADP. The enzyme catalyses dCMP + ATP = dCDP + ADP. The chain is Cytidylate kinase from Bradyrhizobium sp. (strain ORS 278).